A 195-amino-acid chain; its full sequence is MSETKPKRDSEYEGSNIKRMRLDDDDDVLRSPTRTLSSSSSSSLAYSVSDSGGFCSVALSEEEDDHLSSSISSGCSSSETNEIATRLPFSDLEAHEISETEISTLLTNNFRKQGISSSENLGETAEMDSATTEMRDQRKTEKKKKMEKSPTQAELDDFFSAAERYEQKRFTEKYNYDIVNDTPLEGRYQWVSLKP.

Basic and acidic residues predominate over residues 1–11 (MSETKPKRDSE). Disordered stretches follow at residues 1–50 (MSET…SVSD), 61–80 (EEED…SSET), and 117–154 (SSEN…TQAE). Low complexity-rich tracts occupy residues 37–50 (SSSS…SVSD) and 68–80 (SSSI…SSET). Thr151 carries the post-translational modification Phosphothreonine; by KIN10.

It belongs to the CDI family. ICK/KRP subfamily. In terms of assembly, specifically interacts with CDKA-1, but not with CDKB1-1. Interacts with CYCD4-1. Binds to FBL17. Post-translationally, ubiquitinated by SCF(FBL17). Ubiquitination leads to its subsequent degradation, thus controlling cell cycle progression. Expressed in flowers, in developing pollen, and at lower levels in roots and leaves.

It is found in the nucleus. Its subcellular location is the nucleoplasm. Functionally, binds and inhibits CYCD2-1/CDKA-1 complex kinase activity. May target specifically CDKA-1. The protein is Cyclin-dependent kinase inhibitor 7 (KRP7) of Arabidopsis thaliana (Mouse-ear cress).